The sequence spans 171 residues: Shikimate kinase (171 aa).

14–19 (GAGKST) contributes to the ATP binding site. Serine 18 provides a ligand contact to Mg(2+). The substrate site is built by aspartate 36, arginine 60, and glycine 82. Arginine 120 is an ATP binding site. Position 139 (arginine 139) interacts with substrate. Glutamine 156 lines the ATP pocket.

The protein belongs to the shikimate kinase family. As to quaternary structure, monomer. Requires Mg(2+) as cofactor.

The protein localises to the cytoplasm. The enzyme catalyses shikimate + ATP = 3-phosphoshikimate + ADP + H(+). Its pathway is metabolic intermediate biosynthesis; chorismate biosynthesis; chorismate from D-erythrose 4-phosphate and phosphoenolpyruvate: step 5/7. Catalyzes the specific phosphorylation of the 3-hydroxyl group of shikimic acid using ATP as a cosubstrate. The chain is Shikimate kinase from Shewanella loihica (strain ATCC BAA-1088 / PV-4).